Reading from the N-terminus, the 446-residue chain is FAD-dependent monooxygenase eupB (446 aa).

The chain crosses the membrane as a helical span at residues 10-30 (EPHIAIVGGGIVGVILTLGLL). N-linked (GlcNAc...) asparagine glycosylation is present at Asn33. FAD-binding residues include Glu40, Ala53, and Arg125. Catalysis depends on residues Arg206 and Tyr239. The N-linked (GlcNAc...) asparagine glycan is linked to Asn243. FAD is bound by residues Asp322 and Ala335. The N-linked (GlcNAc...) asparagine glycan is linked to Asn395.

Belongs to the paxM FAD-dependent monooxygenase family. FAD is required as a cofactor.

It localises to the membrane. It participates in secondary metabolite biosynthesis; terpenoid biosynthesis. FAD-dependent monooxygenase; part of the gene cluster that mediates the biosynthesis of eupenifeldin, a bistropolone meroterpenoid that acts as an antitumor agent. The first step of eupenifeldin biosynthesis is the biosynthesis of 3-methylorcinaldehyde performed by the non-reducing polyketide synthase eupA. Oxidative dearomatization of 3-methylorcinaldehyde likely catalyzed by the FAD-dependent monooxygenase eupB is followed by oxidative ring expansion by the 2-oxoglutarate-dependent dioxygenase eupC to provide the first tropolone metabolite, tropolone stipitaldehyde. In parallel, generation of sesquiterpene alpha-humulene from farnesylpyrophosphate (FPP) is catalyzed by the terpene cyclase eupE. The cytochrome P450 monooxygenase eupD then hydroxylates humulene to humulenol. The putative Diels-Alderase eupF probably catalyzes the formation of the tropolone-humulene skeleton by linking humulenol and the polyketide moiety. The short-chain dehydrogenase/reductase eupG and the flavin-dependent monooxygenase eupH are also essential for eupenifeldin biosynthesis and are likely the additional decorating enzymes of the tropolone-humulene skeleton to produce final eupenifeldin or derivatives. The polypeptide is FAD-dependent monooxygenase eupB (Phoma sp).